The following is a 264-amino-acid chain: MNRIDERLAALKAAGRKALIPFITAGDPEPDMTVSLMHALVRGGADVIELGIPFSDPMADGPVIQRASERALARGMTLARVLEMVAGFRRTDPDTPVVLMGYLNPVEAMGYAAFASAARAAGVDGVLTVDCPPEESDEYAQVLQSHGLATVFLVAPTTPAARLAAVARLARGYVYYVSIKGVTGAATLDVADVARQVGALREHLSLPVGVGFGIRDAETARAIGEVADAVVIGSRLVQEIEAAGAQAPDRLQALLAGIRQALDA.

Residues E49 and D60 each act as proton acceptor in the active site.

The protein belongs to the TrpA family. Tetramer of two alpha and two beta chains.

It carries out the reaction (1S,2R)-1-C-(indol-3-yl)glycerol 3-phosphate + L-serine = D-glyceraldehyde 3-phosphate + L-tryptophan + H2O. It functions in the pathway amino-acid biosynthesis; L-tryptophan biosynthesis; L-tryptophan from chorismate: step 5/5. The alpha subunit is responsible for the aldol cleavage of indoleglycerol phosphate to indole and glyceraldehyde 3-phosphate. The chain is Tryptophan synthase alpha chain from Laribacter hongkongensis (strain HLHK9).